Here is a 235-residue protein sequence, read N- to C-terminus: Phosphoribosylaminoimidazole-succinocarboxamide synthase (235 aa).

This sequence belongs to the SAICAR synthetase family.

It catalyses the reaction 5-amino-1-(5-phospho-D-ribosyl)imidazole-4-carboxylate + L-aspartate + ATP = (2S)-2-[5-amino-1-(5-phospho-beta-D-ribosyl)imidazole-4-carboxamido]succinate + ADP + phosphate + 2 H(+). Its pathway is purine metabolism; IMP biosynthesis via de novo pathway; 5-amino-1-(5-phospho-D-ribosyl)imidazole-4-carboxamide from 5-amino-1-(5-phospho-D-ribosyl)imidazole-4-carboxylate: step 1/2. This is Phosphoribosylaminoimidazole-succinocarboxamide synthase (purC) from Streptococcus pneumoniae serotype 4 (strain ATCC BAA-334 / TIGR4).